The primary structure comprises 181 residues: Small ribosomal subunit protein bS16 (181 aa).

Residues 150-181 are disordered; that stretch reads KKAAEEAAKAAAEAPAEEAAPAEEAATEAAAE. The span at 158-181 shows a compositional bias: low complexity; the sequence is KAAAEAPAEEAAPAEEAATEAAAE.

It belongs to the bacterial ribosomal protein bS16 family.

The polypeptide is Small ribosomal subunit protein bS16 (Bacteroides fragilis (strain ATCC 25285 / DSM 2151 / CCUG 4856 / JCM 11019 / LMG 10263 / NCTC 9343 / Onslow / VPI 2553 / EN-2)).